Reading from the N-terminus, the 672-residue chain is Synaptotagmin-like protein 4 (672 aa).

Positions 4-122 constitute a RabBD domain; sequence ILDLSFLSEM…KATGDWFYDQ (119 aa). The FYVE-type zinc finger occupies 63–105; that stretch reads CARCQEGLGRLISKSNTCVGCNHLVCRECRVLESNGSWRCKVC. Residues 199–222 form a disordered region; the sequence is SESLDSYTADSDSTSRRDSLDKSG. A phosphoserine mark is found at serine 201, serine 204, serine 217, serine 221, and serine 274. The C2 1 domain occupies 357–479; sequence VTGKIAFSLK…KLDKKLDHCL (123 aa). Residue serine 489 is modified to Phosphoserine. Residues 508-634 enclose the C2 2 domain; it reads PASKLPVGGD…ISSGEVVDWM (127 aa).

Part of a ternary complex containing STX1A and RAB27A. Can bind both dominant negative and dominant active mutants of RAB27A. Binds STXBP1, RAB3A, RAB8A and RAB27B. Interacts with MYO5A. In terms of tissue distribution, detected in insulin-secreting cell lines.

It localises to the membrane. The protein resides in the cytoplasmic vesicle. The protein localises to the secretory vesicle membrane. In terms of biological role, modulates exocytosis of dense-core granules and secretion of hormones in the pancreas and the pituitary. Interacts with vesicles containing negatively charged phospholipids in a Ca(2+)-independent manner. This is Synaptotagmin-like protein 4 (Sytl4) from Rattus norvegicus (Rat).